The chain runs to 305 residues: UDP-3-O-acyl-N-acetylglucosamine deacetylase (305 aa).

Positions 78, 235, and 239 each coordinate Zn(2+). His-262 (proton donor) is an active-site residue.

This sequence belongs to the LpxC family. The cofactor is Zn(2+).

It carries out the reaction a UDP-3-O-[(3R)-3-hydroxyacyl]-N-acetyl-alpha-D-glucosamine + H2O = a UDP-3-O-[(3R)-3-hydroxyacyl]-alpha-D-glucosamine + acetate. The protein operates within glycolipid biosynthesis; lipid IV(A) biosynthesis; lipid IV(A) from (3R)-3-hydroxytetradecanoyl-[acyl-carrier-protein] and UDP-N-acetyl-alpha-D-glucosamine: step 2/6. Functionally, catalyzes the hydrolysis of UDP-3-O-myristoyl-N-acetylglucosamine to form UDP-3-O-myristoylglucosamine and acetate, the committed step in lipid A biosynthesis. The sequence is that of UDP-3-O-acyl-N-acetylglucosamine deacetylase from Geobacter sp. (strain M21).